Consider the following 208-residue polypeptide: Putative archaetidylserine decarboxylase proenzyme (208 aa).

The Schiff-base intermediate with substrate; via pyruvic acid role is filled by Ser171. Ser171 bears the Pyruvic acid (Ser); by autocatalysis mark.

It belongs to the phosphatidylserine decarboxylase family. PSD-A subfamily. As to quaternary structure, heterodimer of a large membrane-associated beta subunit and a small pyruvoyl-containing alpha subunit. Requires pyruvate as cofactor. In terms of processing, is synthesized initially as an inactive proenzyme. Formation of the active enzyme involves a self-maturation process in which the active site pyruvoyl group is generated from an internal serine residue via an autocatalytic post-translational modification. Two non-identical subunits are generated from the proenzyme in this reaction, and the pyruvate is formed at the N-terminus of the alpha chain, which is derived from the carboxyl end of the proenzyme. The post-translation cleavage follows an unusual pathway, termed non-hydrolytic serinolysis, in which the side chain hydroxyl group of the serine supplies its oxygen atom to form the C-terminus of the beta chain, while the remainder of the serine residue undergoes an oxidative deamination to produce ammonia and the pyruvoyl prosthetic group on the alpha chain.

Its subcellular location is the cell membrane. The enzyme catalyses archaetidylserine + H(+) = archaetidylethanolamine + CO2. Catalyzes the formation of archaetidylethanolamine (PtdEtn) from archaetidylserine (PtdSer). In Methanococcoides burtonii (strain DSM 6242 / NBRC 107633 / OCM 468 / ACE-M), this protein is Putative archaetidylserine decarboxylase proenzyme.